Here is a 447-residue protein sequence, read N- to C-terminus: Chaperone protein dnaJ A7B, chloroplastic (447 aa).

Residues Met1–Arg86 constitute a chloroplast transit peptide. Residues Asp90–Gly154 enclose the J domain. The CR-type zinc finger occupies Gly217–Thr298. Zn(2+) contacts are provided by Cys230, Cys233, Cys247, Cys250, Cys273, Cys276, Cys286, and Cys289. CXXCXGXG motif repeat units follow at residues Cys230–Gly237, Cys247–Gly254, Cys273–Gly280, and Cys286–Gly293.

Belongs to the DnaJ family. Interacts with PCNA. In terms of tissue distribution, expressed in roots, stems, leaves and panicles.

The protein localises to the plastid. It localises to the chloroplast. Functionally, plays pivotal roles in chloroplast development. Is essential for the regulation of chloroplast development and differentiation. This chain is Chaperone protein dnaJ A7B, chloroplastic, found in Oryza sativa subsp. japonica (Rice).